Here is a 156-residue protein sequence, read N- to C-terminus: S-ribosylhomocysteine lyase (156 aa).

Positions 53, 57, and 122 each coordinate Fe cation.

It belongs to the LuxS family. In terms of assembly, homodimer. Fe cation is required as a cofactor.

It catalyses the reaction S-(5-deoxy-D-ribos-5-yl)-L-homocysteine = (S)-4,5-dihydroxypentane-2,3-dione + L-homocysteine. Functionally, involved in the synthesis of autoinducer 2 (AI-2) which is secreted by bacteria and is used to communicate both the cell density and the metabolic potential of the environment. The regulation of gene expression in response to changes in cell density is called quorum sensing. Catalyzes the transformation of S-ribosylhomocysteine (RHC) to homocysteine (HC) and 4,5-dihydroxy-2,3-pentadione (DPD). This Finegoldia magna (strain ATCC 29328 / DSM 20472 / WAL 2508) (Peptostreptococcus magnus) protein is S-ribosylhomocysteine lyase.